Reading from the N-terminus, the 610-residue chain is Ubiquilin-like protein (610 aa).

One can recognise a Ubiquitin-like domain in the interval 31–105 (IRVIVKTPGN…IHVVIKSKHG (75 aa)). Positions 562 to 607 (QAPEVRFSKEMECLQAMGFVNYNANLQALIATDGDTNAAIYKLKSS) constitute a UBA domain.

In Mus musculus (Mouse), this protein is Ubiquilin-like protein (Ubqlnl).